Consider the following 206-residue polypeptide: dCTP deaminase, dUMP-forming (206 aa).

Residues 117 to 122 (RSSFGR), Asp-135, 143 to 145 (TLE), Gln-163, Tyr-177, Lys-184, and Gln-188 each bind dCTP. Glu-145 (proton donor/acceptor) is an active-site residue.

Belongs to the dCTP deaminase family. In terms of assembly, homotrimer.

The catalysed reaction is dCTP + 2 H2O = dUMP + NH4(+) + diphosphate. It participates in pyrimidine metabolism; dUMP biosynthesis; dUMP from dCTP: step 1/1. Bifunctional enzyme that catalyzes both the deamination of dCTP to dUTP and the hydrolysis of dUTP to dUMP without releasing the toxic dUTP intermediate. This is dCTP deaminase, dUMP-forming from Methanococcus maripaludis (strain DSM 14266 / JCM 13030 / NBRC 101832 / S2 / LL).